The primary structure comprises 164 residues: MDMVASDNVYAPLYAPFFGFAGCALAMILSCLGAAIGTAKSGIGIAGIGTFKPELIMKSLIPVVMSGILAIYGLVVAVLIAGNLSPTEEYTLFNGFMHLSCGLCVGFACLSSGYAIGIVGDVGVRKYMHQPRLFVGIVLILIFSEVLGLYGMIIALILNTKGSE.

At 1–16 (MDMVASDNVYAPLYAP) the chain is on the lumenal side. A helical membrane pass occupies residues 17–37 (FFGFAGCALAMILSCLGAAIG). The Cytoplasmic segment spans residues 38–59 (TAKSGIGIAGIGTFKPELIMKS). Residues 60 to 80 (LIPVVMSGILAIYGLVVAVLI) traverse the membrane as a helical segment. The Lumenal portion of the chain corresponds to 81–98 (AGNLSPTEEYTLFNGFMH). A helical transmembrane segment spans residues 99-119 (LSCGLCVGFACLSSGYAIGIV). Residues 120-136 (GDVGVRKYMHQPRLFVG) are Cytoplasmic-facing. A helical transmembrane segment spans residues 137–157 (IVLILIFSEVLGLYGMIIALI). The Lumenal portion of the chain corresponds to 158–164 (LNTKGSE).

This sequence belongs to the V-ATPase proteolipid subunit family. As to quaternary structure, V-ATPase is a heteromultimeric enzyme composed of a peripheral catalytic V1 complex (components A to H) attached to an integral membrane V0 proton pore complex (components: a, c, c', c'', d, e, f and VOA1). The decameric c-ring forms the proton-conducting pore, and is composed of eight proteolipid subunits c, one subunit c' and one subunit c''.

The protein resides in the vacuole membrane. Proton-conducting pore forming subunit of the V0 complex of vacuolar(H+)-ATPase (V-ATPase), a multisubunit enzyme composed of a peripheral complex (V1) that hydrolyzes ATP and a membrane integral complex (V0) that translocates protons. V-ATPase is responsible for acidifying and maintaining the pH of intracellular compartments. The chain is V-type proton ATPase subunit c' (VMA11) from Candida glabrata (strain ATCC 2001 / BCRC 20586 / JCM 3761 / NBRC 0622 / NRRL Y-65 / CBS 138) (Yeast).